The sequence spans 117 residues: Big defensin (117 aa).

Positions 1–23 (MEKKTAYCLLFLVLLVPYTALGA) are cleaved as a signal peptide. A propeptide spanning residues 24 to 33 (VLKRAPAKKE) is cleaved from the precursor. Intrachain disulfides connect C82–C112, C89–C107, and C93–C113.

Belongs to the big defensin family.

It localises to the secreted. Its function is as follows. Significantly inhibits the growth of Gram-negative and Gram-positive bacteria and fungi in vitro. The chain is Big defensin from Branchiostoma belcheri (Amphioxus).